The chain runs to 155 residues: Ribosome maturation factor RimP (155 aa).

It belongs to the RimP family.

Its subcellular location is the cytoplasm. In terms of biological role, required for maturation of 30S ribosomal subunits. This Macrococcus caseolyticus (strain JCSC5402) (Macrococcoides caseolyticum) protein is Ribosome maturation factor RimP.